The following is a 262-amino-acid chain: 3-deoxy-manno-octulosonate cytidylyltransferase (262 aa).

This sequence belongs to the KdsB family.

It localises to the cytoplasm. The catalysed reaction is 3-deoxy-alpha-D-manno-oct-2-ulosonate + CTP = CMP-3-deoxy-beta-D-manno-octulosonate + diphosphate. Its pathway is nucleotide-sugar biosynthesis; CMP-3-deoxy-D-manno-octulosonate biosynthesis; CMP-3-deoxy-D-manno-octulosonate from 3-deoxy-D-manno-octulosonate and CTP: step 1/1. It functions in the pathway bacterial outer membrane biogenesis; lipopolysaccharide biosynthesis. In terms of biological role, activates KDO (a required 8-carbon sugar) for incorporation into bacterial lipopolysaccharide in Gram-negative bacteria. The protein is 3-deoxy-manno-octulosonate cytidylyltransferase of Acidovorax ebreus (strain TPSY) (Diaphorobacter sp. (strain TPSY)).